Reading from the N-terminus, the 271-residue chain is Shikimate dehydrogenase (NADP(+)) (271 aa).

Shikimate contacts are provided by residues 14-16 (SKS) and Thr61. The active-site Proton acceptor is Lys65. Residues Asn86 and Asp102 each coordinate shikimate. Residues 126-130 (GAGGA), 149-154 (NRTFSR), and Met213 each bind NADP(+). Tyr215 provides a ligand contact to shikimate. Gly238 is an NADP(+) binding site.

Belongs to the shikimate dehydrogenase family. In terms of assembly, homodimer.

It catalyses the reaction shikimate + NADP(+) = 3-dehydroshikimate + NADPH + H(+). It functions in the pathway metabolic intermediate biosynthesis; chorismate biosynthesis; chorismate from D-erythrose 4-phosphate and phosphoenolpyruvate: step 4/7. Functionally, involved in the biosynthesis of the chorismate, which leads to the biosynthesis of aromatic amino acids. Catalyzes the reversible NADPH linked reduction of 3-dehydroshikimate (DHSA) to yield shikimate (SA). This Histophilus somni (strain 2336) (Haemophilus somnus) protein is Shikimate dehydrogenase (NADP(+)).